The sequence spans 235 residues: Methylosome subunit pICln (235 aa).

The tract at residues 1–21 is disordered; the sequence is MSFLKSFPPPGSAEGLRQQQP. At Ser-2 the chain carries N-acetylserine. Ser-100, Ser-142, Ser-191, Ser-193, Ser-196, and Ser-208 each carry phosphoserine. Residues 133-157 are disordered; sequence LHPDPEDEDSDDYDGEEYDVEAHEQ. Positions 137–151 are enriched in acidic residues; that stretch reads PEDEDSDDYDGEEYD. Positions 195–217 are disordered; it reads SSQYNMAGVRTEDSTRDYEDGME. A compositionally biased stretch (basic and acidic residues) spans 204–213; it reads RTEDSTRDYE. At Thr-221 the chain carries Phosphothreonine.

The protein belongs to the pICln (TC 1.A.47) family. In terms of assembly, component of the methylosome, a 20S complex containing at least PRMT5/SKB1, WDR77/MEP50 and CLNS1A/pICln. May mediate SNRPD1 and SNRPD3 methylation. Forms a 6S pICln-Sm complex composed of CLNS1A/pICln, SNRPD1, SNRPD2, SNRPE, SNRPF and SNRPG; ring-like structure where CLNS1A/pICln mimics additional Sm proteins and which is unable to assemble into the core snRNP. Interacts with LSM10 and LSM11.

It localises to the cytoplasm. Its subcellular location is the cytosol. The protein resides in the nucleus. The protein localises to the cytoskeleton. Its function is as follows. Involved in both the assembly of spliceosomal snRNPs and the methylation of Sm proteins. Chaperone that regulates the assembly of spliceosomal U1, U2, U4 and U5 small nuclear ribonucleoproteins (snRNPs), the building blocks of the spliceosome, and thereby plays an important role in the splicing of cellular pre-mRNAs. Most spliceosomal snRNPs contain a common set of Sm proteins SNRPB, SNRPD1, SNRPD2, SNRPD3, SNRPE, SNRPF and SNRPG that assemble in a heptameric protein ring on the Sm site of the small nuclear RNA to form the core snRNP (Sm core). In the cytosol, the Sm proteins SNRPD1, SNRPD2, SNRPE, SNRPF and SNRPG are trapped in an inactive 6S pICln-Sm complex by the chaperone CLNS1A that controls the assembly of the core snRNP. Dissociation by the SMN complex of CLNS1A from the trapped Sm proteins and their transfer to an SMN-Sm complex triggers the assembly of core snRNPs and their transport to the nucleus. The protein is Methylosome subunit pICln (CLNS1A) of Canis lupus familiaris (Dog).